A 171-amino-acid chain; its full sequence is Neuronal vesicle trafficking-associated protein 2 (171 aa).

Residues 1 to 21 (MVKLNSNPGEKGAKPPSVEDG) form a disordered region. Topologically, residues 1-71 (MVKLNSNPGE…FRVPKIAEFT (71 aa)) are cytoplasmic. The chain crosses the membrane as a helical; Signal-anchor for type II membrane protein span at residues 72–92 (VTILVSLALAFLACIVFLVVY). Residues 93–171 (KAFTYDHSCP…EPKPPKTQGH (79 aa)) are Lumenal-facing.

It belongs to the NSG family. As to expression, specifically expressed in neural and neuroendocrine tissues. Pituitary and less in adrenal gland and testis. Expressed in the hippocampus throughout development. Remains enriched in layer V cortical neurons during development. At P0, broadly expressed in the neocortex. Is down-regulated overall at P8 and P14, but remains relatively enriched in layer V. At P0 is lower expressed in the cerebellum. Expression remains low throughout development, and is undetectable by adulthood.

It localises to the membrane. It is found in the golgi apparatus. The protein resides in the trans-Golgi network membrane. The protein localises to the cell projection. Its subcellular location is the dendrite. It localises to the endosome membrane. It is found in the early endosome membrane. The protein resides in the late endosome membrane. The protein localises to the lysosome lumen. Its subcellular location is the cytoplasmic vesicle membrane. It localises to the golgi stack membrane. It is found in the endosome. The protein resides in the multivesicular body membrane. The chain is Neuronal vesicle trafficking-associated protein 2 from Mus musculus (Mouse).